The chain runs to 269 residues: Intermembrane phospholipid transport system ATP-binding protein MlaF (269 aa).

An ABC transporter domain is found at 9–245; the sequence is VDMRDVSFTR…PDPRVRQFLD (237 aa). 41–48 contacts ATP; the sequence is GPSGIGKT.

The protein belongs to the ABC transporter superfamily. MlaF family. In terms of assembly, the complex is composed of two ATP-binding proteins (MlaF), two transmembrane proteins (MlaE), two cytoplasmic solute-binding proteins (MlaB) and six periplasmic solute-binding proteins (MlaD).

The protein localises to the cell inner membrane. Part of the ABC transporter complex MlaFEDB, which is involved in a phospholipid transport pathway that maintains lipid asymmetry in the outer membrane by retrograde trafficking of phospholipids from the outer membrane to the inner membrane. Responsible for energy coupling to the transport system. This chain is Intermembrane phospholipid transport system ATP-binding protein MlaF, found in Escherichia coli O157:H7.